We begin with the raw amino-acid sequence, 296 residues long: Formamidopyrimidine-DNA glycosylase (296 aa).

Pro-2 serves as the catalytic Schiff-base intermediate with DNA. Glu-3 acts as the Proton donor in catalysis. The Proton donor; for beta-elimination activity role is filled by Lys-58. His-104, Arg-126, and Lys-169 together coordinate DNA. Residues 260 to 296 (SVYDREGQACGTPGCGGTVARIVQAGRSTFYCAACQK) form an FPG-type zinc finger. Arg-286 (proton donor; for delta-elimination activity) is an active-site residue.

This sequence belongs to the FPG family. Monomer. It depends on Zn(2+) as a cofactor.

The enzyme catalyses Hydrolysis of DNA containing ring-opened 7-methylguanine residues, releasing 2,6-diamino-4-hydroxy-5-(N-methyl)formamidopyrimidine.. It carries out the reaction 2'-deoxyribonucleotide-(2'-deoxyribose 5'-phosphate)-2'-deoxyribonucleotide-DNA = a 3'-end 2'-deoxyribonucleotide-(2,3-dehydro-2,3-deoxyribose 5'-phosphate)-DNA + a 5'-end 5'-phospho-2'-deoxyribonucleoside-DNA + H(+). In terms of biological role, involved in base excision repair of DNA damaged by oxidation or by mutagenic agents. Acts as a DNA glycosylase that recognizes and removes damaged bases. Has a preference for oxidized purines, such as 7,8-dihydro-8-oxoguanine (8-oxoG). Has AP (apurinic/apyrimidinic) lyase activity and introduces nicks in the DNA strand. Cleaves the DNA backbone by beta-delta elimination to generate a single-strand break at the site of the removed base with both 3'- and 5'-phosphates. The chain is Formamidopyrimidine-DNA glycosylase from Rhizobium etli (strain ATCC 51251 / DSM 11541 / JCM 21823 / NBRC 15573 / CFN 42).